The primary structure comprises 607 residues: Glutamine--fructose-6-phosphate aminotransferase [isomerizing] (607 aa).

Cysteine 2 serves as the catalytic Nucleophile; for GATase activity. Positions 2 to 217 (CGIIGIIGRE…EGDWVVLTRE (216 aa)) constitute a Glutamine amidotransferase type-2 domain. SIS domains lie at 283-422 (PDFD…VKGQ) and 455-597 (VATA…VDQP). Lysine 602 (for Fru-6P isomerization activity) is an active-site residue.

As to quaternary structure, homodimer.

The protein resides in the cytoplasm. It carries out the reaction D-fructose 6-phosphate + L-glutamine = D-glucosamine 6-phosphate + L-glutamate. Its function is as follows. Catalyzes the first step in hexosamine metabolism, converting fructose-6P into glucosamine-6P using glutamine as a nitrogen source. This is Glutamine--fructose-6-phosphate aminotransferase [isomerizing] from Zymomonas mobilis subsp. mobilis (strain ATCC 31821 / ZM4 / CP4).